The primary structure comprises 500 residues: Bifunctional protein GlmU (500 aa).

The interval 1 to 242 is pyrophosphorylase; that stretch reads MPVQTAVVVL…SAKVAGANDR (242 aa). UDP-N-acetyl-alpha-D-glucosamine contacts are provided by residues 10-13, K24, Q81, and 86-87; these read LAAG and GT. Mg(2+) is bound at residue D112. Positions 151, 167, 182, and 240 each coordinate UDP-N-acetyl-alpha-D-glucosamine. N240 serves as a coordination point for Mg(2+). Residues 243 to 263 form a linker region; that stretch reads VQLSRLAAELNRRTVENWMRA. The interval 264–500 is N-acetyltransferase; the sequence is GVTVVDPSTT…KQDLKDGIEQ (237 aa). 2 residues coordinate UDP-N-acetyl-alpha-D-glucosamine: R345 and K363. Residue H375 is the Proton acceptor of the active site. Residues Y378 and N389 each coordinate UDP-N-acetyl-alpha-D-glucosamine. Residues A392, 398 to 399, S417, and A435 contribute to the acetyl-CoA site; that span reads NY. The interval 459–500 is disordered; sequence DGWVQRNRPGTPAAEAASAAGPHHSSDLHETEKQDLKDGIEQ. The span at 482-500 shows a compositional bias: basic and acidic residues; the sequence is HSSDLHETEKQDLKDGIEQ.

It in the N-terminal section; belongs to the N-acetylglucosamine-1-phosphate uridyltransferase family. The protein in the C-terminal section; belongs to the transferase hexapeptide repeat family. As to quaternary structure, homotrimer. The cofactor is Mg(2+).

The protein localises to the cytoplasm. The enzyme catalyses alpha-D-glucosamine 1-phosphate + acetyl-CoA = N-acetyl-alpha-D-glucosamine 1-phosphate + CoA + H(+). It catalyses the reaction N-acetyl-alpha-D-glucosamine 1-phosphate + UTP + H(+) = UDP-N-acetyl-alpha-D-glucosamine + diphosphate. Its pathway is nucleotide-sugar biosynthesis; UDP-N-acetyl-alpha-D-glucosamine biosynthesis; N-acetyl-alpha-D-glucosamine 1-phosphate from alpha-D-glucosamine 6-phosphate (route II): step 2/2. The protein operates within nucleotide-sugar biosynthesis; UDP-N-acetyl-alpha-D-glucosamine biosynthesis; UDP-N-acetyl-alpha-D-glucosamine from N-acetyl-alpha-D-glucosamine 1-phosphate: step 1/1. It participates in bacterial outer membrane biogenesis; LPS lipid A biosynthesis. Its function is as follows. Catalyzes the last two sequential reactions in the de novo biosynthetic pathway for UDP-N-acetylglucosamine (UDP-GlcNAc). The C-terminal domain catalyzes the transfer of acetyl group from acetyl coenzyme A to glucosamine-1-phosphate (GlcN-1-P) to produce N-acetylglucosamine-1-phosphate (GlcNAc-1-P), which is converted into UDP-GlcNAc by the transfer of uridine 5-monophosphate (from uridine 5-triphosphate), a reaction catalyzed by the N-terminal domain. The chain is Bifunctional protein GlmU from Rhodococcus opacus (strain B4).